The primary structure comprises 1222 residues: Probable disease resistance protein At5g45510 (1222 aa).

An ATP-binding site is contributed by 49-56 (GEAGIGKT). The stretch at 122–183 (GERDEDEEEE…KLEAEKKLVD (62 aa)) forms a coiled coil. Composition is skewed to basic and acidic residues over residues 171-205 (AAEKLEAEKKLVDPAAKKAKDHGNKNPTDAAKEKT), 212-224 (GEDKAQTSSERKP), 263-279 (RRQETEEATKSGEHAEG), and 286-322 (SGEKKEDTDGEDEIRSADKEEPESQARVKTEEKHEKV). Disordered regions lie at residues 171–225 (AAEK…RKPY) and 263–327 (RRQE…PPTI). Thr293 carries the phosphothreonine modification. LRR repeat units follow at residues 654-676 (LLRVLIIRDCDLLKSIEELKALT), 677-699 (KLNTLEVSGASSLSKISEKFFES), 702-724 (ELRSLHLSGLKIESSPPSISGLK), 725-747 (ELHCLIIKDCPLLQDLPNIQELV), 785-806 (KLQHLDFSGSQIERLPIFQDSA), 813-835 (SLTRLLLRNCSKLRRLPSLKPLS), 836-856 (GLQILDLSGTTSLVEMLEVCF), 861-883 (ELKTLNLSGTNLSELATTIEDLS), 884-906 (SLNELLLRDCINLDAIPNIEKLE), 907-929 (NLEVIDVSGSAKLAKIEGSFEKM), and 931-951 (YLRVVDLSGTQVETPELPADT).

It belongs to the disease resistance NB-LRR family.

Probable disease resistance protein. The polypeptide is Probable disease resistance protein At5g45510 (Arabidopsis thaliana (Mouse-ear cress)).